Reading from the N-terminus, the 481-residue chain is Glutamyl-tRNA(Gln) amidotransferase subunit A (481 aa).

Active-site charge relay system residues include Lys76 and Ser151. The active-site Acyl-ester intermediate is the Ser175.

The protein belongs to the amidase family. GatA subfamily. As to quaternary structure, heterotrimer of A, B and C subunits.

The enzyme catalyses L-glutamyl-tRNA(Gln) + L-glutamine + ATP + H2O = L-glutaminyl-tRNA(Gln) + L-glutamate + ADP + phosphate + H(+). Allows the formation of correctly charged Gln-tRNA(Gln) through the transamidation of misacylated Glu-tRNA(Gln) in organisms which lack glutaminyl-tRNA synthetase. The reaction takes place in the presence of glutamine and ATP through an activated gamma-phospho-Glu-tRNA(Gln). The polypeptide is Glutamyl-tRNA(Gln) amidotransferase subunit A (Chlorobaculum parvum (strain DSM 263 / NCIMB 8327) (Chlorobium vibrioforme subsp. thiosulfatophilum)).